Consider the following 227-residue polypeptide: ATP synthase F(0) complex subunit a (227 aa).

6 consecutive transmembrane segments (helical) span residues 14 to 34 (LLGIPLIAMAIMIPWLIFPTP), 69 to 89 (WATILTALMLFLITINLLGLL), 99 to 119 (LSLNMAFAIPLWLTTVLIGML), 137 to 157 (LLIPILIIIETISLFIRPLAL), 180 to 200 (FVLITIMPTVALLTSLILFLL), and 202 to 222 (ILEVAVAMIQAYVFVLLLSLY).

Belongs to the ATPase A chain family. In terms of assembly, component of the ATP synthase complex composed at least of ATP5F1A/subunit alpha, ATP5F1B/subunit beta, ATP5MC1/subunit c (homooctomer), MT-ATP6/subunit a, MT-ATP8/subunit 8, ATP5ME/subunit e, ATP5MF/subunit f, ATP5MG/subunit g, ATP5MK/subunit k, ATP5MJ/subunit j, ATP5F1C/subunit gamma, ATP5F1D/subunit delta, ATP5F1E/subunit epsilon, ATP5PF/subunit F6, ATP5PB/subunit b, ATP5PD/subunit d, ATP5PO/subunit OSCP. ATP synthase complex consists of a soluble F(1) head domain (subunits alpha(3) and beta(3)) - the catalytic core - and a membrane F(0) domain - the membrane proton channel (subunits c, a, 8, e, f, g, k and j). These two domains are linked by a central stalk (subunits gamma, delta, and epsilon) rotating inside the F1 region and a stationary peripheral stalk (subunits F6, b, d, and OSCP). Interacts with DNAJC30; interaction is direct.

The protein localises to the mitochondrion inner membrane. The enzyme catalyses H(+)(in) = H(+)(out). Subunit a, of the mitochondrial membrane ATP synthase complex (F(1)F(0) ATP synthase or Complex V) that produces ATP from ADP in the presence of a proton gradient across the membrane which is generated by electron transport complexes of the respiratory chain. ATP synthase complex consist of a soluble F(1) head domain - the catalytic core - and a membrane F(1) domain - the membrane proton channel. These two domains are linked by a central stalk rotating inside the F(1) region and a stationary peripheral stalk. During catalysis, ATP synthesis in the catalytic domain of F(1) is coupled via a rotary mechanism of the central stalk subunits to proton translocation. With the subunit c (ATP5MC1), forms the proton-conducting channel in the F(0) domain, that contains two crucial half-channels (inlet and outlet) that facilitate proton movement from the mitochondrial intermembrane space (IMS) into the matrix. Protons are taken up via the inlet half-channel and released through the outlet half-channel, following a Grotthuss mechanism. The chain is ATP synthase F(0) complex subunit a from Squalus acanthias (Spiny dogfish).